Consider the following 447-residue polypeptide: Asparagine--tRNA ligase (447 aa).

Belongs to the class-II aminoacyl-tRNA synthetase family. Homodimer.

It is found in the cytoplasm. The enzyme catalyses tRNA(Asn) + L-asparagine + ATP = L-asparaginyl-tRNA(Asn) + AMP + diphosphate + H(+). The chain is Asparagine--tRNA ligase from Streptococcus pneumoniae serotype 4 (strain ATCC BAA-334 / TIGR4).